The following is a 604-amino-acid chain: Polycomb group protein EMF2B (604 aa).

The segment at 310-331 (CPFCLVPCGSFKGLGCHLNASH) adopts a C2H2-type zinc-finger fold. Residues 396–440 (PHIVDSGSPEDAQAGSEDDYVQRENGSSVAHASVDPANSLHGSNL) form a disordered region. The segment at 454 to 589 (LSVERADPRN…DARAMNACNT (136 aa)) is VEFS-box.

This sequence belongs to the VEFS (VRN2-EMF2-FIS2-SU(Z)12) family. Component of the polycomb repressive complex 2 (PRC2), composed of the core PRC2 components FIE2, EZ1 and CLF. PRC2 methylates 'Lys-27' residues of histone H3 (H3K27me3), leading to transcriptional repression of the affected target gene. Widely expressed.

In terms of biological role, polycomb group (PcG) protein. PcG proteins act by forming multiprotein complexes, which are required to maintain the transcriptionally repressive state of homeotic genes throughout development. PcG proteins are not required to initiate repression, but to maintain it during later stages of development. They act via the methylation of histones, rendering chromatin heritably changed in its expressibility. Polycomb group (PcG) protein involved in the repression of flowering under long day (LD) conditions. Regulates floret development. This chain is Polycomb group protein EMF2B, found in Oryza sativa subsp. japonica (Rice).